We begin with the raw amino-acid sequence, 301 residues long: Glycine--tRNA ligase alpha subunit (301 aa).

Belongs to the class-II aminoacyl-tRNA synthetase family. In terms of assembly, tetramer of two alpha and two beta subunits.

It localises to the cytoplasm. The enzyme catalyses tRNA(Gly) + glycine + ATP = glycyl-tRNA(Gly) + AMP + diphosphate. This Glaesserella parasuis serovar 5 (strain SH0165) (Haemophilus parasuis) protein is Glycine--tRNA ligase alpha subunit.